Reading from the N-terminus, the 184-residue chain is Major urinary protein 3 (184 aa).

A signal peptide spans 1–22 (MKLLLPLLLLLCLELTLVCIHA). Asparagine 66 is a glycosylation site (N-linked (GlcNAc...) asparagine). Residues cysteine 86 and cysteine 179 are joined by a disulfide bond.

The protein belongs to the calycin superfamily. Lipocalin family. Post-translationally, glycosylated. Abundant in the urine of adult male mice but absent from that of females.

It is found in the secreted. Binds pheromones that are released from drying urine of males. These pheromones affect the sexual behavior of females. This chain is Major urinary protein 3 (Mup3), found in Mus musculus (Mouse).